A 468-amino-acid polypeptide reads, in one-letter code: 3-isopropylmalate dehydratase large subunit (468 aa).

[4Fe-4S] cluster contacts are provided by Cys-347, Cys-407, and Cys-410. Positions Ser-424–Gly-441 are enriched in polar residues. The interval Ser-424–Thr-443 is disordered.

The protein belongs to the aconitase/IPM isomerase family. LeuC type 1 subfamily. In terms of assembly, heterodimer of LeuC and LeuD. It depends on [4Fe-4S] cluster as a cofactor.

The catalysed reaction is (2R,3S)-3-isopropylmalate = (2S)-2-isopropylmalate. The protein operates within amino-acid biosynthesis; L-leucine biosynthesis; L-leucine from 3-methyl-2-oxobutanoate: step 2/4. Functionally, catalyzes the isomerization between 2-isopropylmalate and 3-isopropylmalate, via the formation of 2-isopropylmaleate. The polypeptide is 3-isopropylmalate dehydratase large subunit (Prochlorococcus marinus (strain MIT 9215)).